Reading from the N-terminus, the 312-residue chain is Translation initiation factor IF3-2, chloroplastic (312 aa).

The transit peptide at 1–55 (MAGITSSTVGFNAVFTGITKTVSSHSLFSVDSKLCSLRLSKTELSFTNLTPSPRR) directs the protein to the chloroplast. The span at 253-263 (EMIRKPQEPPT) shows a compositional bias: basic and acidic residues. The disordered stretch occupies residues 253–312 (EMIRKPQEPPTRKKKKTAENEASASAAEITAEPEPEPEPEPEPEPEPEPEPEPEPLQIDS). The segment covering 272–282 (NEASASAAEIT) has biased composition (low complexity). The span at 283 to 305 (AEPEPEPEPEPEPEPEPEPEPEP) shows a compositional bias: acidic residues.

The protein belongs to the IF-3 family. In terms of assembly, monomer. In terms of tissue distribution, highly expressed in young, newly emerged leaves.

The protein resides in the plastid. It localises to the chloroplast. Functionally, chloroplast translation initiation factor that is essential for the coordination of leaf and chloroplast development. IF-3 binds to the 30S ribosomal subunit and shifts the equilibrium between 70S ribosomes and their 50S and 30S subunits in favor of the free subunits, thus enhancing the availability of 30S subunits on which protein synthesis initiation begins. The sequence is that of Translation initiation factor IF3-2, chloroplastic from Arabidopsis thaliana (Mouse-ear cress).